A 588-amino-acid chain; its full sequence is Neopullulanase (588 aa).

5 residues coordinate Ca(2+): N147, N149, S153, G172, and D174. Positions 247 and 326 each coordinate substrate. D328 functions as the Nucleophile in the catalytic mechanism. The active-site Proton donor is E357. Substrate contacts are provided by residues 423-424, D468, and R472; that span reads HD.

This sequence belongs to the glycosyl hydrolase 13 family. As to quaternary structure, homodimer. Requires Ca(2+) as cofactor.

It carries out the reaction Hydrolysis of pullulan to panose (6-alpha-D-glucosylmaltose).. Functionally, hydrolyzes pullulan efficiently but only a small amount of starch. Endohydrolysis of 1,4-alpha-glucosidic linkages in pullulan to form panose. Also cleaves (1-6)-alpha-glucosidic linkages to form maltotriose. In Geobacillus stearothermophilus (Bacillus stearothermophilus), this protein is Neopullulanase (nplT).